Consider the following 341-residue polypeptide: Methionine import ATP-binding protein MetN (341 aa).

Residues 2-241 (IELNQVVKRY…PQHEVTRRFV (240 aa)) form the ABC transporter domain. ATP is bound at residue 38–45 (GFSGAGKS).

This sequence belongs to the ABC transporter superfamily. Methionine importer (TC 3.A.1.24) family. The complex is composed of two ATP-binding proteins (MetN), two transmembrane proteins (MetI) and a solute-binding protein (MetQ).

The protein localises to the cell membrane. The enzyme catalyses L-methionine(out) + ATP + H2O = L-methionine(in) + ADP + phosphate + H(+). It catalyses the reaction D-methionine(out) + ATP + H2O = D-methionine(in) + ADP + phosphate + H(+). Its function is as follows. Part of the ABC transporter complex MetNIQ involved in methionine import. Responsible for energy coupling to the transport system. The chain is Methionine import ATP-binding protein MetN from Staphylococcus haemolyticus (strain JCSC1435).